Consider the following 218-residue polypeptide: MTKFSQNIDYLRNKVFVPGVVLSTLYSPGLSAKTCIIKYLDGEVRKILCPTGLKPGNSVLTGIEIPIALGNHLLLKNLPLGTDIHNVELYPGCGGKLARAGGTFANVIAKEGSYVTLRLPSGEVRFISKYCWATIGRICEKNNGKKALYKAGQNRWIGKRPHVRGVVKNPVDHPHGGGEGRSPIGRSHPVTPWGRIALGQRTRKSKRYSDLLILSRRK.

Residues 165–192 are disordered; sequence GVVKNPVDHPHGGGEGRSPIGRSHPVTP.

Belongs to the universal ribosomal protein uL2 family. As to quaternary structure, part of the 50S ribosomal subunit.

It localises to the plastid. The protein localises to the chloroplast. The polypeptide is Large ribosomal subunit protein uL2c (rpl2) (Bigelowiella natans (Pedinomonas minutissima)).